The sequence spans 372 residues: Oxidoreductase ptaL (372 aa).

A signal peptide spans 1–16 (MKHIVIIGGGFAGVST). 6-hydroxy-FAD-binding positions include 8–12 (GGGFA) and arginine 51. Residue asparagine 251 is glycosylated (N-linked (GlcNAc...) asparagine). Residue aspartate 285 participates in 6-hydroxy-FAD binding.

The protein belongs to the FAD-dependent oxidoreductase family. The cofactor is 6-hydroxy-FAD.

It participates in secondary metabolite biosynthesis. Its function is as follows. Oxidoreductase; part of the gene cluster that mediates the biosynthesis of pestheic acid, a diphenyl ether which is a biosynthetic precursor of the unique chloropupukeananes. The biosynthesis initiates from condensation of acetate and malonate units catalyzed by the non-reducing PKS ptaA. As the ptaA protein is TE/CLC domain-deficient, hydrolysis and Claisen cyclization of the polyketide could be catalyzed by ptaB containing a beta-lactamase domain. The ptaB protein might hydrolyze the thioester bond between the ACP of ptaA and the intermediate to release atrochrysone carboxylic acid, which is spontaneously dehydrated to form endocrocin anthrone. Endocrocin anthrone is then converted to endocrocin, catalyzed by the anthrone oxygenase ptaC. Spontaneous decarboxylation of endocrocin occurs to generate emodin. An O-methyltransferase (ptaH or ptaI) could methylate emodin to form physcion. PtaJ could then catalyze the oxidative cleavage of physcion, and rotation of the intermediate could then afford desmethylisosulochrin. PtaF, a putative NADH-dependent oxidoreductase, might also participate in the oxidative cleavage step. Desmethylisosulochrin is then transformed by another O-methyltransferase (ptaH or ptaI) to form isosulochrin. Chlorination of isosulochrin by ptaM in the cyclohexadienone B ring then produces chloroisosulochrin. PtaE is responsible for the oxidative coupling reactions of both benzophenones isosulochrin and chloroisosulochrin to RES-1214-1 and pestheic acid respectively, regardless of chlorination. This is Oxidoreductase ptaL from Pestalotiopsis fici (strain W106-1 / CGMCC3.15140).